We begin with the raw amino-acid sequence, 245 residues long: Transmembrane and ubiquitin-like domain-containing protein 1 (245 aa).

A required to release iHOPS from membranes region spans residues 2 to 30; sequence ALIEGVGDEVTVLFAVLACLLVLALAWVS. Residues 11–31 form a helical membrane-spanning segment; sequence VTVLFAVLACLLVLALAWVST. The interval 33–100 is disordered; sequence TTESTDPQPQ…ASTPPDSPQE (68 aa). A phosphoserine mark is found at Ser73, Ser97, and Ser126. The region spanning 102–175 is the Ubiquitin-like domain; the sequence is LLLRLKFLND…LHCHVSTRVG (74 aa). Helical transmembrane passes span 194–214 and 219–239; these read IGSL…YCQI and FFPL…SLLA.

As to quaternary structure, interacts with EEF1A1, CAMLG, GRIA2 and GRIP1. Interacts with NPM1 and CDKN2A; TMUB1 can enhance interaction between NPM1 and CDKN2A and is proposed to bridge the proteins; proposed to be mediated by iHOPS. Interacts with TUBG1. Interacts with ERLIN2 and AMFR; TMUB1 promotes the interaction of ERLIN2 with AMFR. Isoform 1 (lHOPS) is processed by regulated intramembrane proteolysis (RIP) in the N-terminus to release iHOPS from membranes. Post-translationally, isoform 2 seems to undergo a selective cleavage in the C-terminal region to release an additional cytoplasmic form. Expressed in adult brain; at protein level. Isoform 1 (lHOPS) is highly expressed in small intestine, stomach and epididymis. Isoform 2 (sHOPS) and iHOPS are abundantly expressed in brain, liver and adrenal gland.

It localises to the membrane. It is found in the postsynaptic cell membrane. The protein localises to the recycling endosome. Its subcellular location is the cytoplasm. The protein resides in the nucleus. It localises to the nucleolus. It is found in the cytoskeleton. The protein localises to the microtubule organizing center. Its subcellular location is the centrosome. Functionally, involved in sterol-regulated ubiquitination and degradation of HMG-CoA reductase HMGCR. Involved in positive regulation of AMPA-selective glutamate receptor GRIA2 recycling to the cell surface. Acts as a negative regulator of hepatocyte growth during regeneration. May contribute to the regulation of translation during cell-cycle progression. May contribute to the regulation of cell proliferation. May be involved in centrosome assembly. Modulates stabilization and nucleolar localization of tumor suppressor CDKN2A and enhances association between CDKN2A and NPM1. The chain is Transmembrane and ubiquitin-like domain-containing protein 1 (Tmub1) from Mus musculus (Mouse).